Reading from the N-terminus, the 162-residue chain is Ribose-5-phosphate isomerase B (162 aa).

D-ribulose 5-phosphate is bound by residues 11–12 (DH) and 70–74 (GSGNG). Glutamate 75 acts as the Proton acceptor in catalysis. Histidine 102 functions as the Proton donor in the catalytic mechanism. Asparagine 103, arginine 113, arginine 137, and arginine 141 together coordinate D-ribulose 5-phosphate.

This sequence belongs to the LacAB/RpiB family. In terms of assembly, homodimer.

It catalyses the reaction aldehydo-D-ribose 5-phosphate = D-ribulose 5-phosphate. It participates in carbohydrate degradation; pentose phosphate pathway; D-ribose 5-phosphate from D-ribulose 5-phosphate (non-oxidative stage): step 1/1. In terms of biological role, catalyzes the interconversion of ribulose-5-P and ribose-5-P. The polypeptide is Ribose-5-phosphate isomerase B (Mycobacterium bovis (strain ATCC BAA-935 / AF2122/97)).